Reading from the N-terminus, the 365-residue chain is Flagellar P-ring protein (365 aa).

The N-terminal stretch at 1-20 (MKLPHFFVLAALVLSGAAHA) is a signal peptide.

This sequence belongs to the FlgI family. As to quaternary structure, the basal body constitutes a major portion of the flagellar organelle and consists of four rings (L,P,S, and M) mounted on a central rod.

Its subcellular location is the periplasm. The protein localises to the bacterial flagellum basal body. Functionally, assembles around the rod to form the L-ring and probably protects the motor/basal body from shearing forces during rotation. The chain is Flagellar P-ring protein from Thiobacillus denitrificans (strain ATCC 25259 / T1).